Consider the following 220-residue polypeptide: Large ribosomal subunit protein uL4 (220 aa).

Residues 45–102 are disordered; the sequence is AARQGTHKTKTRGEVRGGGRKPFRQKGTGRARQGSIRAPHYTGGGTVHGPVPRDYSQR. The segment covering 62–73 has biased composition (basic residues); that stretch reads GGRKPFRQKGTG.

This sequence belongs to the universal ribosomal protein uL4 family. In terms of assembly, part of the 50S ribosomal subunit.

One of the primary rRNA binding proteins, this protein initially binds near the 5'-end of the 23S rRNA. It is important during the early stages of 50S assembly. It makes multiple contacts with different domains of the 23S rRNA in the assembled 50S subunit and ribosome. In terms of biological role, forms part of the polypeptide exit tunnel. This chain is Large ribosomal subunit protein uL4, found in Corynebacterium aurimucosum (strain ATCC 700975 / DSM 44827 / CIP 107346 / CN-1) (Corynebacterium nigricans).